Consider the following 116-residue polypeptide: Holo-[acyl-carrier-protein] synthase (116 aa).

Mg(2+) is bound by residues aspartate 5 and glutamate 50.

The protein belongs to the P-Pant transferase superfamily. AcpS family. It depends on Mg(2+) as a cofactor.

The protein resides in the cytoplasm. The catalysed reaction is apo-[ACP] + CoA = holo-[ACP] + adenosine 3',5'-bisphosphate + H(+). In terms of biological role, transfers the 4'-phosphopantetheine moiety from coenzyme A to a Ser of acyl-carrier-protein. This Campylobacter lari (strain RM2100 / D67 / ATCC BAA-1060) protein is Holo-[acyl-carrier-protein] synthase.